The chain runs to 311 residues: MTGGGNITEITYFILLGFSDFPRIIKVLFTIFLVIYITSLAWNLSLIVLIRMDSHLHTPMYFFLSNLSFIDVCYISSTVPKMLSNLLQEQQTITFVGCIIQYFIFSTMGLSESCLMTAMAYDRYAAICNPLLYSSIMSPTLCVWMVLGAYMTGLTASLFQIGALLQLHFCGSNVIRHFFCDMPQLLILSCTDTFFVQVMTAILTMFFGIASALVIMISYGYIGISIMKITSAKGRSKAFNTCASHLTAVSLFYTSGIFVYLSSSSGGSSSFDRFASVFYTVVIPMLNPLIYSLRNKEIKDALKRLQKRKCC.

Residues Met1–Lys26 are Extracellular-facing. Asn6 carries an N-linked (GlcNAc...) asparagine glycan. A helical membrane pass occupies residues Val27–Ile47. At Val48 to His55 the chain is on the cytoplasmic side. The chain crosses the membrane as a helical span at residues Leu56–Ser76. Residues Ser77–Ile100 lie on the Extracellular side of the membrane. Cys98 and Cys190 are disulfide-bonded. A helical membrane pass occupies residues Gln101–Tyr121. Topologically, residues Asp122 to Ser134 are cytoplasmic. A helical transmembrane segment spans residues Ser135–Thr155. Over Ala156 to Gln197 the chain is Extracellular. Residues Val198–Ser218 traverse the membrane as a helical segment. Topologically, residues Tyr219–Ala238 are cytoplasmic. The chain crosses the membrane as a helical span at residues Phe239–Val259. The Extracellular segment spans residues Tyr260 to Asp272. A helical transmembrane segment spans residues Arg273–Leu293. The Cytoplasmic portion of the chain corresponds to Arg294 to Cys311.

This sequence belongs to the G-protein coupled receptor 1 family.

It localises to the cell membrane. Its function is as follows. Odorant receptor for musk, which specifically recognizes muscone, musk xylol, and musk ketone. Ligand-binding causes a conformation change that triggers signaling via G(s)-class of G alpha protein GNAL, activating adenylyl cyclase. The chain is Olfactory receptor 5AN1 from Homo sapiens (Human).